A 497-amino-acid polypeptide reads, in one-letter code: Aldehyde dehydrogenase (497 aa).

NAD(+) is bound at residue 241-246 (GSTLVG). The active-site Proton acceptor is the glutamate 264. Cysteine 298 acts as the Nucleophile in catalysis.

This sequence belongs to the aldehyde dehydrogenase family.

The catalysed reaction is an aldehyde + NAD(+) + H2O = a carboxylate + NADH + 2 H(+). It participates in alcohol metabolism; ethanol degradation; acetate from ethanol: step 2/2. This chain is Aldehyde dehydrogenase (aldA), found in Emericella nidulans (strain FGSC A4 / ATCC 38163 / CBS 112.46 / NRRL 194 / M139) (Aspergillus nidulans).